Here is a 374-residue protein sequence, read N- to C-terminus: Probable tRNA pseudouridine synthase D (374 aa).

Asp81 (nucleophile) is an active-site residue. The TRUD domain maps to 141 to 340; it reads VFPNYFDVQR…RKGFQKMYDL (200 aa).

It belongs to the pseudouridine synthase TruD family.

The catalysed reaction is uridine(13) in tRNA = pseudouridine(13) in tRNA. In terms of biological role, could be responsible for synthesis of pseudouridine from uracil-13 in transfer RNAs. The polypeptide is Probable tRNA pseudouridine synthase D (Nanoarchaeum equitans (strain Kin4-M)).